We begin with the raw amino-acid sequence, 309 residues long: GTP cyclohydrolase FolE2 (309 aa).

The protein belongs to the GTP cyclohydrolase IV family.

It catalyses the reaction GTP + H2O = 7,8-dihydroneopterin 3'-triphosphate + formate + H(+). It functions in the pathway cofactor biosynthesis; 7,8-dihydroneopterin triphosphate biosynthesis; 7,8-dihydroneopterin triphosphate from GTP: step 1/1. Its function is as follows. Converts GTP to 7,8-dihydroneopterin triphosphate. The sequence is that of GTP cyclohydrolase FolE2 from Serratia proteamaculans (strain 568).